We begin with the raw amino-acid sequence, 183 residues long: ATP synthase subunit b, chloroplastic (183 aa).

The helical transmembrane segment at 25–45 (DILATNLINLTVVVGVLIFFG) threads the bilayer.

Belongs to the ATPase B chain family. As to quaternary structure, F-type ATPases have 2 components, F(1) - the catalytic core - and F(0) - the membrane proton channel. F(1) has five subunits: alpha(3), beta(3), gamma(1), delta(1), epsilon(1). F(0) has four main subunits: a(1), b(1), b'(1) and c(10-14). The alpha and beta chains form an alternating ring which encloses part of the gamma chain. F(1) is attached to F(0) by a central stalk formed by the gamma and epsilon chains, while a peripheral stalk is formed by the delta, b and b' chains.

It is found in the plastid. The protein resides in the chloroplast thylakoid membrane. Functionally, f(1)F(0) ATP synthase produces ATP from ADP in the presence of a proton or sodium gradient. F-type ATPases consist of two structural domains, F(1) containing the extramembraneous catalytic core and F(0) containing the membrane proton channel, linked together by a central stalk and a peripheral stalk. During catalysis, ATP synthesis in the catalytic domain of F(1) is coupled via a rotary mechanism of the central stalk subunits to proton translocation. Its function is as follows. Component of the F(0) channel, it forms part of the peripheral stalk, linking F(1) to F(0). This chain is ATP synthase subunit b, chloroplastic, found in Zea mays (Maize).